The chain runs to 238 residues: Cysteine-rich venom protein natrin-2 (238 aa).

Residues 1–19 form the signal peptide; the sequence is MIAFIVLLSLAAVLQQSSG. The SCP domain occupies 38-164; sequence VDKHNALRRS…SSKYLYVCQY (127 aa). Intrachain disulfides connect Cys-75-Cys-153, Cys-92-Cys-165, Cys-148-Cys-162, Cys-184-Cys-191, Cys-187-Cys-196, Cys-200-Cys-233, Cys-209-Cys-227, and Cys-218-Cys-231. Residues 200 to 233 enclose the ShKT domain; that stretch reads CKHHNVFSNCQSLAKQNACQTEWMKSKCAASCFC.

As to expression, expressed by the venom gland.

It localises to the secreted. Its function is as follows. Inhibits carbachol-induced muscle contraction and weakly blocks muscle contraction evoked by potassium. The protein is Cysteine-rich venom protein natrin-2 of Naja atra (Chinese cobra).